We begin with the raw amino-acid sequence, 500 residues long: Coiled-coil domain-containing protein 85A (500 aa).

Positions 1-23 are enriched in low complexity; that stretch reads MSKAAGGSAPAAESCPSAPAGAS. The disordered stretch occupies residues 1–30; sequence MSKAAGGSAPAAESCPSAPAGASTPTGVDD. Coiled coils occupy residues 38–104 and 132–171; these read ELLQ…RDLC and MHKE…DEEK. Disordered stretches follow at residues 200 to 405 and 426 to 465; these read RDVG…SGMN and NRML…QPEP. Positions 204–215 are enriched in low complexity; it reads DGSSTSSTGSTD. Basic and acidic residues predominate over residues 231–254; sequence HLQKPRSEGSPEHTKHRSTSPEHL. A compositionally biased stretch (gly residues) spans 372 to 381; the sequence is GSGGSGGGSR. The span at 383–395 shows a compositional bias: basic and acidic residues; the sequence is GTLRRPAQEDSSS. The stretch at 404–429 forms a coiled coil; the sequence is MNESTLSYVRQLEARVRQLEEENRML. A compositionally biased stretch (polar residues) spans 434–463; it reads FRLSSGADGNNSSLNSPASFSGHTTPSQQP. An Asymmetric dimethylarginine modification is found at arginine 488.

This sequence belongs to the CCDC85 family. As to quaternary structure, may interact with ARVCF; CTNND1; CTNND2 and PKP4.

It is found in the cell junction. The protein localises to the adherens junction. Its function is as follows. May play a role in cell-cell adhesion and epithelium development through its interaction with proteins of the beta-catenin family. In Mus musculus (Mouse), this protein is Coiled-coil domain-containing protein 85A (Ccdc85a).